Here is a 192-residue protein sequence, read N- to C-terminus: UPF0149 protein VIBHAR_03551 (192 aa).

Belongs to the UPF0149 family.

The polypeptide is UPF0149 protein VIBHAR_03551 (Vibrio campbellii (strain ATCC BAA-1116)).